Consider the following 644-residue polypeptide: Putative aldehyde dehydrogenase-like protein YHR039C (644 aa).

Asparagine 15 is a glycosylation site (N-linked (GlcNAc...) asparagine). Residue glutamate 354 is the Proton acceptor of the active site. Cysteine 389 serves as the catalytic Nucleophile. N-linked (GlcNAc...) asparagine glycans are attached at residues asparagine 565 and asparagine 627.

This sequence belongs to the aldehyde dehydrogenase family. In terms of processing, N-glycosylated.

The protein resides in the endoplasmic reticulum. The polypeptide is Putative aldehyde dehydrogenase-like protein YHR039C (MSC7) (Saccharomyces cerevisiae (strain ATCC 204508 / S288c) (Baker's yeast)).